The chain runs to 978 residues: Regulator of MON1-CCZ1 complex homolog (978 aa).

2 stretches are compositionally biased toward low complexity: residues 311 to 351 and 479 to 495; these read TSTP…MISS and NNNN…NNNN. Disordered regions lie at residues 311–363, 474–546, 558–665, and 703–727; these read TSTP…HKEQ, SINQ…NSKT, KQQQ…NNHV, and EKEK…NNNI. The segment covering 496 to 515 has biased composition (polar residues); that stretch reads TAQTLNSTGNLSNSISIGGM. Low complexity predominate over residues 516–539; that stretch reads NTSTDNLTTTTTTSSSISSSPSNS. The span at 582–591 shows a compositional bias: gly residues; it reads GDGGSGGSGG. 2 stretches are compositionally biased toward low complexity: residues 592 to 663 and 710 to 727; these read SFYN…NNNN and NNNN…NNNI. A Mic1 domain is found at 735–908; that stretch reads KLELDSKYLI…HPSFDKYIKL (174 aa). Residues 955-978 form a disordered region; that stretch reads NNSSPTLRSSNSLNSSPRLQYSNN.

Belongs to the RMC1 family.

It is found in the lysosome membrane. Its subcellular location is the late endosome membrane. May have a role in autophagy. In Dictyostelium discoideum (Social amoeba), this protein is Regulator of MON1-CCZ1 complex homolog.